Consider the following 423-residue polypeptide: Anthranilate 1,2-dioxygenase large subunit (423 aa).

The 116-residue stretch at tryptophan 53–alanine 168 folds into the Rieske domain. Positions 95, 97, 115, and 118 each coordinate [2Fe-2S] cluster. Fe cation is bound by residues histidine 223, histidine 228, and aspartate 370.

The protein belongs to the bacterial ring-hydroxylating dioxygenase alpha subunit family. In terms of assembly, part of a multicomponent enzyme system composed of a reductase (AndAa), a ferredoxin (AndAb) and a two-subunit oxygenase component (AndAc and AndAd). It depends on Fe cation as a cofactor. The cofactor is [2Fe-2S] cluster.

The enzyme catalyses anthranilate + NADH + O2 + 3 H(+) = catechol + NH4(+) + CO2 + NAD(+). It catalyses the reaction anthranilate + NADPH + O2 + 3 H(+) = catechol + NH4(+) + CO2 + NADP(+). Its pathway is aromatic compound metabolism; anthranilate degradation via hydroxylation; catechol from anthranilate: step 1/1. Functionally, oxygenase component of anthranilate dioxygenase multicomponent enzyme system which catalyzes the incorporation of both atoms of molecular oxygen into anthranilate to form catechol. Can also act on benzoate and salicylate but not on 2-chlorobenzoate or o-toluate. In Burkholderia cepacia (Pseudomonas cepacia), this protein is Anthranilate 1,2-dioxygenase large subunit.